The following is a 136-amino-acid chain: Protein NrdI (136 aa).

Belongs to the NrdI family.

Functionally, probably involved in ribonucleotide reductase function. This is Protein NrdI from Salmonella paratyphi A (strain ATCC 9150 / SARB42).